Reading from the N-terminus, the 655-residue chain is Sphingomyelin phosphodiesterase 3 (655 aa).

At 1–10 (MVLYTTPFPN) the chain is on the cytoplasmic side. Residues 11–31 (SCLSALHCVSWALIFPCYWLV) constitute an intramembrane region (helical). Over 32–64 (DRLAASFIPTTYEKRQRADDPCCLQLLCTALFT) the chain is Cytoplasmic. 3 S-palmitoyl cysteine lipidation sites follow: Cys53, Cys54, and Cys59. Residues 65 to 85 (PIYLALLVASLPFAFLGFLFW) constitute an intramembrane region (helical). Topologically, residues 86–655 (SPLQSARRPY…LMVSSGEEEA (570 aa)) are cytoplasmic. The residue at position 178 (Ser178) is a Phosphoserine. Residues 210–319 (VEYKGDGGRH…DTSASGEPGA (110 aa)) are disordered. 2 stretches are compositionally biased toward basic and acidic residues: residues 212–222 (YKGDGGRHPGD) and 248–257 (GGEEGGRPPE). Polar residues predominate over residues 279–299 (TPNHNQQDGDSGSLGSPSASR). At Ser291 the chain carries Phosphoserine. Glu364 provides a ligand contact to Mg(2+). S-palmitoyl cysteine attachment occurs at residues Cys397 and Cys398. Catalysis depends on His639, which acts as the Proton acceptor.

The protein belongs to the neutral sphingomyelinase family. The cofactor is Mg(2+). Palmitoylated, palmitoylation-deficient proteins are targeted for lysosomal degradation. As to expression, predominantly expressed in brain.

The protein localises to the golgi apparatus membrane. Its subcellular location is the cell membrane. The enzyme catalyses a sphingomyelin + H2O = phosphocholine + an N-acylsphing-4-enine + H(+). It catalyses the reaction N-(15Z-tetracosenoyl)sphing-4-enine-1-phosphocholine + H2O = N-(15Z-tetracosenoyl)-sphing-4-enine + phosphocholine + H(+). The catalysed reaction is N-(tetracosanoyl)-sphing-4-enine-1-phosphocholine + H2O = N-tetracosanoyl-sphing-4-enine + phosphocholine + H(+). It carries out the reaction an N-(acyl)-sphingosylphosphocholine + H2O = an N-acyl-sphingoid base + phosphocholine + H(+). The enzyme catalyses 1-hexadecanoyl-sn-glycero-3-phosphocholine + H2O = 1-hexadecanoyl-sn-glycerol + phosphocholine + H(+). It catalyses the reaction 1-O-octadecyl-sn-glycero-3-phosphocholine + H2O = 1-O-octadecyl-sn-glycerol + phosphocholine + H(+). The catalysed reaction is a sphingosylphosphocholine + H2O = a sphingoid base + phosphocholine + H(+). It carries out the reaction N-(hexadecanoyl)-sphing-4-enine-1-phosphocholine + H2O = N-hexadecanoylsphing-4-enine + phosphocholine + H(+). It functions in the pathway lipid metabolism; sphingolipid metabolism. With respect to regulation, inhibited by nSMase inhibitor GW4869. Binding of anionic phospholipids (APLs) such as phosphatidylserine (PS) and phosphatidic acid (PA) increases enzymatic activity. Functionally, catalyzes the hydrolysis of sphingomyelin to form ceramide and phosphocholine. Ceramide mediates numerous cellular functions, such as apoptosis and growth arrest, and is capable of regulating these 2 cellular events independently. Also hydrolyzes sphingosylphosphocholine. Regulates the cell cycle by acting as a growth suppressor in confluent cells. Probably acts as a regulator of postnatal development and participates in bone and dentin mineralization. Binds to anionic phospholipids (APLs) such as phosphatidylserine (PS) and phosphatidic acid (PA) that modulate enzymatic activity and subcellular location. May be involved in IL-1-beta-induced JNK activation in hepatocytes. May act as a mediator in transcriptional regulation of NOS2/iNOS via the NF-kappa-B activation under inflammatory conditions. This is Sphingomyelin phosphodiesterase 3 from Homo sapiens (Human).